The primary structure comprises 344 residues: [LysW]-L-2-aminoadipate 6-phosphate reductase (344 aa).

NADP(+) is bound by residues 12 to 15 (SGYA), 36 to 38 (SRR), and L75. Residue C148 is part of the active site. Positions 180, 184, and 312 each coordinate NADP(+).

Belongs to the NAGSA dehydrogenase family. Type 1 subfamily. LysY sub-subfamily. As to quaternary structure, homotetramer. Interacts with LysW. May form a ternary complex with LysW and LysZ.

It localises to the cytoplasm. The enzyme catalyses [amino-group carrier protein]-C-terminal-N-(1-carboxy-5-oxopentan-1-yl)-L-glutamine + phosphate + NADP(+) = [amino-group carrier protein]-C-terminal-N-(1-carboxy-5-phosphooxy-5-oxopentan-1-yl)-L-glutamine + NADPH + H(+). Its pathway is amino-acid biosynthesis; L-lysine biosynthesis via AAA pathway; L-lysine from L-alpha-aminoadipate (Thermus route): step 3/5. Its function is as follows. Catalyzes the NADPH-dependent reduction of [LysW]-aminoadipate 6-phosphate to yield [LysW]-aminoadipate 6-semialdehyde. This chain is [LysW]-L-2-aminoadipate 6-phosphate reductase, found in Thermus thermophilus (strain ATCC BAA-163 / DSM 7039 / HB27).